We begin with the raw amino-acid sequence, 396 residues long: Tryptophan synthase beta chain (396 aa).

Lys86 bears the N6-(pyridoxal phosphate)lysine mark.

The protein belongs to the TrpB family. In terms of assembly, tetramer of two alpha and two beta chains. It depends on pyridoxal 5'-phosphate as a cofactor.

It catalyses the reaction (1S,2R)-1-C-(indol-3-yl)glycerol 3-phosphate + L-serine = D-glyceraldehyde 3-phosphate + L-tryptophan + H2O. The protein operates within amino-acid biosynthesis; L-tryptophan biosynthesis; L-tryptophan from chorismate: step 5/5. Functionally, the beta subunit is responsible for the synthesis of L-tryptophan from indole and L-serine. The chain is Tryptophan synthase beta chain from Vibrio vulnificus (strain CMCP6).